A 145-amino-acid chain; its full sequence is Immune protein Tsi3 (145 aa).

The N-terminal stretch at 1 to 15 (MKTVALILASLALLA) is a signal peptide. Cys-16 carries the N-palmitoyl cysteine lipid modification. Cys-16 carries S-diacylglycerol cysteine lipidation. The interval 53-85 (FDEGGKLRNPRQLEVQRQDAPPPPDLASRRLGD) is disordered. Ca(2+) is bound at residue Glu-126.

As to quaternary structure, forms a heterotetramer with Tse3 consisting of two Tse3 dimers and two Tsi3 dimers. Formation of the complex inactivates Tse3 enzymatic activity.

Its function is as follows. Immunity protein that plays a role in preventing early activation of toxin Tse3. Occupies Tse3 substrate binding site and prevents the substrate from entering. The polypeptide is Immune protein Tsi3 (Pseudomonas aeruginosa (strain ATCC 15692 / DSM 22644 / CIP 104116 / JCM 14847 / LMG 12228 / 1C / PRS 101 / PAO1)).